A 489-amino-acid polypeptide reads, in one-letter code: WRKY transcription factor 72B (489 aa).

Disordered regions lie at residues 1-100, 131-159, and 234-267; these read MENK…EMRE, QKET…QEAD, and DENE…RARV. Composition is skewed to basic and acidic residues over residues 32–52 and 83–100; these read GRKE…KDYM and THKE…EMRE. Residues 84–132 are a coiled coil; sequence HKEQDDQLASAKDEMREVMEENQRLRMHLDRMMKEYRNLQNQFHDIVQK. The span at 138-147 shows a compositional bias: low complexity; sequence SSSTTVNTST. Residues 273-339 constitute a DNA-binding region (WRKY); it reads CDAPTMNDGC…YEGTHNHTLP (67 aa). Disordered stretches follow at residues 356–381 and 427–454; these read LLSG…PTTT and TSTS…YNYN. 2 stretches are compositionally biased toward low complexity: residues 371-381 and 427-438; these read TATTTTTPTTT and TSTSSSSPSSLS.

It belongs to the WRKY group II-b family.

The protein resides in the nucleus. In association with WRKY72A, contributes to basal defense against root-knot nematodes (RKNs) and potato aphids, as well as Mi-1-mediated gene-for-gene resistance to these pests. Both WRKY72A and WRKY72B are not required for gene-for-gene resistance mediated by Pto, another tomato R gene. The protein is WRKY transcription factor 72B of Solanum lycopersicum (Tomato).